Here is a 284-residue protein sequence, read N- to C-terminus: NAD kinase (284 aa).

Asp-61 serves as the catalytic Proton acceptor. NAD(+) contacts are provided by residues 61–62 (DG), Arg-66, 136–137 (ND), Arg-147, Lys-164, Asp-166, and Leu-201.

This sequence belongs to the NAD kinase family. The cofactor is a divalent metal cation.

Its subcellular location is the cytoplasm. The enzyme catalyses NAD(+) + ATP = ADP + NADP(+) + H(+). Involved in the regulation of the intracellular balance of NAD and NADP, and is a key enzyme in the biosynthesis of NADP. Catalyzes specifically the phosphorylation on 2'-hydroxyl of the adenosine moiety of NAD to yield NADP. In Dehalococcoides mccartyi (strain CBDB1), this protein is NAD kinase.